The chain runs to 440 residues: MKLWGGRFKEEESKLMEDFNSSLSFDKKLYYEDIKGSIAHVKMLTNQNIIKEEEKEKILLGLEEILKEIDEGILKIEGDYEDIHSFVEINLINKIGNVGKKLHTGRSRNDQVALDMKLYAKKSTEEVIECLKELMDSLIKVGNENNYIMPGYTHLQRAQVVTFRYHLLAYFEMFKRDEKRLENALEILNESPLGSGALAGSTYNIDKEYTAKLLGFRKPVDNFLDGVSDRDYIIELISKFSIIMMHLSRLSEELILWSSSEFRFIQIGDAYSTGSSIMPQKKNPDGAELIRGKIGRVYGDLISILTVMKSLPLAYNKDMQEDKEPFFDAKDTVISCLKVMEGIISTLKVNKENLMKSVKKGFLNATEAADYLVNKGMAFRDAHKVIGEVVIYCEDKNSAIEDLSLEELKQFSDLFCEDIYEFIDYKNSINKGIKKEMGYF.

The protein belongs to the lyase 1 family. Argininosuccinate lyase subfamily.

The protein localises to the cytoplasm. It catalyses the reaction 2-(N(omega)-L-arginino)succinate = fumarate + L-arginine. It participates in amino-acid biosynthesis; L-arginine biosynthesis; L-arginine from L-ornithine and carbamoyl phosphate: step 3/3. The chain is Argininosuccinate lyase from Clostridium botulinum (strain ATCC 19397 / Type A).